We begin with the raw amino-acid sequence, 429 residues long: Probable M18 family aminopeptidase 2 (429 aa).

Histidine 82, histidine 156, and histidine 401 together coordinate Zn(2+).

This sequence belongs to the peptidase M18 family. Zn(2+) serves as cofactor.

The protein is Probable M18 family aminopeptidase 2 of Pseudomonas aeruginosa (strain LESB58).